Reading from the N-terminus, the 836-residue chain is Protein O-mannosyl-transferase TMTC2 (836 aa).

A helical transmembrane segment spans residues 1–21 (MIAELVSSALGLALYLNTLSA). Topologically, residues 22–77 (DFCYDDSRAIKTNQDLLPETPWTHIFYNDFWGTLLTHSGSHKSYRPLCTLSFRLNH) are extracellular. The helical transmembrane segment at 78 to 98 (AIGGLNPWSYHLVNVLLHAAV) threads the bilayer. Residues 99–107 (TGLFTRFSK) are Cytoplasmic-facing. A helical transmembrane segment spans residues 108-128 (ALLGDGYWTFMAGLMFASHPI). Residues 129-132 (HTEA) are Extracellular-facing. The helical transmembrane segment at 133-153 (VAGIVGRADVGASLFFLLSLL) threads the bilayer. Residues 154–168 (CYIKHCSTRGYSART) lie on the Cytoplasmic side of the membrane. A run of 2 helical transmembrane segments spans residues 169–184 (WGWF…CSML) and 185–204 (WKEQ…VFVF). The Cytoplasmic portion of the chain corresponds to 205–220 (HRLKMKQILPTIYKRK). A helical transmembrane segment spans residues 221-241 (NLSLFLSISLLTFWGTCLLGA). Topologically, residues 242–312 (RLYWMGNKPP…KTVCDWRNLH (71 aa)) are extracellular. A helical membrane pass occupies residues 313 to 333 (TVAFYSGLLLLAYCGLKNPSL). At 334-392 (EGECNGKALTNGKQNANGHSCHSDVEYRNSEMKPSFASKVENGIKNCVPQRTQLPSTEN) the chain is on the cytoplasmic side. The helical transmembrane segment at 393-415 (IVILSLSLLIIPFIPATNLFFYV) threads the bilayer. At 416-422 (GFVIAER) the chain is on the extracellular side. The chain crosses the membrane as a helical span at residues 423–443 (VLYIPSMGFCLLITVGARALY). The Cytoplasmic segment spans residues 444-449 (VKVQKR). The helical transmembrane segment at 450 to 470 (FLKSLVFYATATLIVFYGVKT) threads the bilayer. The Extracellular segment spans residues 471-836 (AIRNGDWQNE…EKQGLKTSKT (366 aa)). TPR repeat units lie at residues 493–526 (AKAW…RSNM), 527–560 (ADML…RPTL), 561–594 (ASAY…PDEN), 606–639 (TSCL…MPRH), 643–676 (QSLY…KTDH), 677–710 (IPAH…DPTK), 711–744 (GNCY…DNTE), 745–778 (FDVV…RPNY), and 779–812 (PAAL…KPDD).

This sequence belongs to the TMTC family.

The protein localises to the membrane. It is found in the endoplasmic reticulum. It carries out the reaction a di-trans,poly-cis-dolichyl beta-D-mannosyl phosphate + L-seryl-[protein] = 3-O-(alpha-D-mannosyl)-L-seryl-[protein] + a di-trans,poly-cis-dolichyl phosphate + H(+). It catalyses the reaction a di-trans,poly-cis-dolichyl beta-D-mannosyl phosphate + L-threonyl-[protein] = 3-O-(alpha-D-mannosyl)-L-threonyl-[protein] + a di-trans,poly-cis-dolichyl phosphate + H(+). Its pathway is protein modification; protein glycosylation. Its function is as follows. Transfers mannosyl residues to the hydroxyl group of serine or threonine residues. The 4 members of the TMTC family are O-mannosyl-transferases dedicated primarily to the cadherin superfamily, each member seems to have a distinct role in decorating the cadherin domains with O-linked mannose glycans at specific regions. Also acts as O-mannosyl-transferase on other proteins such as PDIA3. In Mus musculus (Mouse), this protein is Protein O-mannosyl-transferase TMTC2.